The chain runs to 143 residues: Putative complexin-1 (143 aa).

A disordered region spans residues 16–72 (EVTGGLGMKDDGGEKTETGEDPEVIAARLEQEERRKEKHRKMENEREKMRQGIRDKY). Composition is skewed to basic and acidic residues over residues 23 to 33 (MKDDGGEKTET) and 44 to 72 (LEQE…RDKY). The stretch at 40–71 (IAARLEQEERRKEKHRKMENEREKMRQGIRDK) forms a coiled coil.

The protein belongs to the complexin/synaphin family.

The protein resides in the cytoplasm. The protein localises to the cytosol. Positively regulates a late step in synaptic vesicle exocytosis. This Caenorhabditis elegans protein is Putative complexin-1 (cpx-1).